A 269-amino-acid chain; its full sequence is 2-dehydro-3-deoxyphosphooctonate aldolase (269 aa).

It belongs to the KdsA family.

It localises to the cytoplasm. The enzyme catalyses D-arabinose 5-phosphate + phosphoenolpyruvate + H2O = 3-deoxy-alpha-D-manno-2-octulosonate-8-phosphate + phosphate. The protein operates within carbohydrate biosynthesis; 3-deoxy-D-manno-octulosonate biosynthesis; 3-deoxy-D-manno-octulosonate from D-ribulose 5-phosphate: step 2/3. It participates in bacterial outer membrane biogenesis; lipopolysaccharide biosynthesis. This chain is 2-dehydro-3-deoxyphosphooctonate aldolase, found in Chlamydia abortus (strain DSM 27085 / S26/3) (Chlamydophila abortus).